Consider the following 64-residue polypeptide: Large ribosomal subunit protein bL35 (64 aa).

Belongs to the bacterial ribosomal protein bL35 family.

This chain is Large ribosomal subunit protein bL35, found in Lactiplantibacillus plantarum (strain ATCC BAA-793 / NCIMB 8826 / WCFS1) (Lactobacillus plantarum).